The following is a 1101-amino-acid chain: MSVSGDDFDDYFDDEIDDVIVPGTSDTVESVQTNNRPAKQSDISISQGNEEDEFQSPDRLSGNAVQFEDVERTSKYNVFIPKCKNVQENIFVTQLTQPPSPPEMIRGPRWKKPGPEPLAPEPATTRVGANHQSDQYHDEDKEMEAAIAASLRSFEEENGGDVPSTASGSTPARTAAAPCAAPKGTAADVPFDLDDIPDDAFDSDLSLSPPRSTSQATRGPPVQSQFRTNRPLGLRQSTLFDMAARNPDISSQRGEQIFSPPEKSEPPTHHKLNEEALNTWVYPTNLGKTRDYQFNIAQRGLFHNLLVALPTGLGKTFIAATIMLNWYRWTKSAQIIFVAPTKPLVAQQISACFQVAGIPRSETTMLTGEAAPGIRAEEWKSKRVFFMTPQTLVNDLKSGIADPKRIVLLVVDEAHRATGGYAYVEVVKFLKRYNKSFRVLALTATPGSTVESVQAIIDDLGIAKVEIRTEQSLDIREYVHARDTEVQTFQNSDEMVLCMELFTRTLQPLVDQLRNLNAYWGRDPMALTAFGLTKARQQWMGSDAGRNANLALKGKVNAIFTVLASLAHAIDLLKYHGITPFYRHLLHFQSNTDGQKGGKYQRQIVQDESFKKLMNHLQPWTKNPDFIGHPKLEYLKQVVLNHFMDRGEGTAANGDQSQSATRIMIFVHFRDSAEEVVRVLKRHEPLIRPHVFVGQSSAKGSEGMDQKTQLSIVQKFKKGTYNTIVATSIGEEGLDIGEVDLIVCYDSSASPIRMLQRMGRTGRKRAGNIVLLLMQGKEEESYIKAKDNYEKMQQMIASGTRFTFHDDKSPRILPPGVRPVAEKRQIDIPVENTQADLPEPRRRARPPKRPPKKFHMPDDVETGFAKASSLTGKVTKKAETKRAVRKPTPEPVEVPALEEVLLTPRQQQDLERRYCHIAGTSPEFIRNPRVDAYPRLQSVPRPTKAVKHGSLTSRMIGTLQKMGKVSVDCESRYRKVLALDSSKEIVDSVLSRDPWPPAKNSGRLGEKTHAFKRPSATPRPNNVHVREDENEDNCTPELVSPEKLMSSFLEPHTERPPYSSQRSQDAFELDFPDVETLLNRSAERHVSRKRNRFVLDDDSDE.

4 disordered regions span residues 22 to 59 (PGTS…SPDR), 95 to 138 (LTQP…QYHD), 154 to 231 (FEEE…TNRP), and 250 to 270 (SSQR…PTHH). Residues 24–48 (TSDTVESVQTNNRPAKQSDISISQG) show a composition bias toward polar residues. The segment covering 170 to 190 (TPARTAAAPCAAPKGTAADVP) has biased composition (low complexity). Positions 191–202 (FDLDDIPDDAFD) are enriched in acidic residues. The segment covering 209–228 (PPRSTSQATRGPPVQSQFRT) has biased composition (polar residues). The Helicase ATP-binding domain maps to 296–464 (IAQRGLFHNL…AIIDDLGIAK (169 aa)). ATP is bound at residue 309 to 316 (LPTGLGKT). The DEAH box motif lies at 412-415 (DEAH). In terms of domain architecture, Helicase C-terminal spans 634–808 (YLKQVVLNHF…GTRFTFHDDK (175 aa)). Disordered stretches follow at residues 824-890 (RQID…PTPE) and 991-1067 (SRDP…QDAF). Residues 842 to 854 (RRARPPKRPPKKF) show a composition bias toward basic residues.

The protein belongs to the DEAD box helicase family. DEAH subfamily. FANCM sub-subfamily. As to quaternary structure, interacts with the MHF histone-fold complex to form the FANCM-MHF complex.

The protein localises to the nucleus. The catalysed reaction is ATP + H2O = ADP + phosphate + H(+). Its function is as follows. ATP-dependent DNA helicase involved in DNA damage repair by homologous recombination and in genome maintenance. Capable of unwinding D-loops. Plays a role in limiting crossover recombinants during mitotic DNA double-strand break (DSB) repair. Component of a FANCM-MHF complex which promotes gene conversion at blocked replication forks, probably by reversal of the stalled fork. The polypeptide is ATP-dependent DNA helicase mph1 (Aspergillus fumigatus (strain CBS 144.89 / FGSC A1163 / CEA10) (Neosartorya fumigata)).